Here is a 361-residue protein sequence, read N- to C-terminus: uncharacterized protein (361 aa).

The segment covering 1–10 (MRRYLKKAKP) has biased composition (basic residues). Disordered stretches follow at residues 1 to 82 (MRRY…SSFH) and 94 to 147 (ALSH…VNTS). Composition is skewed to basic and acidic residues over residues 44 to 57 (KEKN…KYEN) and 120 to 134 (FTKK…ESEL). The span at 135-147 (QTRSSPPLPVNTS) shows a compositional bias: polar residues. The stretch at 295–349 (NILTMDEQIQRLKEAIASEKLQQEERSQIIKSLMEEELEINEQEEKIKHSFIDLD) forms a coiled coil.

The protein localises to the cytoplasm. It localises to the nucleus. This is an uncharacterized protein from Schizosaccharomyces pombe (strain 972 / ATCC 24843) (Fission yeast).